A 505-amino-acid polypeptide reads, in one-letter code: UDP-N-acetylglucosamine diphosphorylase 1 (505 aa).

Residues 1 to 10 (MIEPSMEREN) show a composition bias toward basic and acidic residues. The tract at residues 1-32 (MIEPSMERENGALTAATTTTTAVTSPPPMASS) is disordered. The span at 14 to 24 (TAATTTTTAVT) shows a compositional bias: low complexity. The Substrate binding motif lies at 134-137 (LSGG). Position 253 (asparagine 253) interacts with substrate. Residues 335-336 (EY) carry the Substrate binding motif. Lysine 432 provides a ligand contact to substrate.

The protein belongs to the UDPGP type 1 family. As to quaternary structure, monomer. Mg(2+) is required as a cofactor. Requires Mn(2+) as cofactor. As to expression, expressed in root tips, stipules and mature pollen grains.

The catalysed reaction is N-acetyl-alpha-D-glucosamine 1-phosphate + UTP + H(+) = UDP-N-acetyl-alpha-D-glucosamine + diphosphate. The enzyme catalyses N-acetyl-alpha-D-galactosamine 1-phosphate + UTP + H(+) = UDP-N-acetyl-alpha-D-galactosamine + diphosphate. Its pathway is nucleotide-sugar biosynthesis; UDP-N-acetyl-alpha-D-glucosamine biosynthesis; UDP-N-acetyl-alpha-D-glucosamine from N-acetyl-alpha-D-glucosamine 1-phosphate: step 1/1. With respect to regulation, inhibited by hygromycin and streptomycin, but not by gentamycin or kanamycin. Uridylyltransferase involved in the biosynthesis of UDP-glucosamine, an essential precursor for glycoprotein and glycolipid synthesis. Can use both UDP-glucosamine and the 4-epimer UDP-galactosamine as substrates, but no other sugars or NTPs. Acts redundantly with GLCNAC1PUT2. Required for gametogenesis and embryo development. The polypeptide is UDP-N-acetylglucosamine diphosphorylase 1 (GLCNAC1PUT1) (Arabidopsis thaliana (Mouse-ear cress)).